A 512-amino-acid polypeptide reads, in one-letter code: Cytochrome P450 monooxygenase 208 (512 aa).

The chain crosses the membrane as a helical span at residues 4-24 (LFLVLDTGAAVLLVALLFVVY). Cys-438 contacts heme.

It belongs to the cytochrome P450 family. Requires heme as cofactor.

It localises to the membrane. Its pathway is secondary metabolite biosynthesis. Functionally, cytochrome P450 monooxygenase that is able to use 7-ethoxycoumarin as a substrate for oxidation. In Postia placenta (strain ATCC 44394 / Madison 698-R) (Brown rot fungus), this protein is Cytochrome P450 monooxygenase 208.